The primary structure comprises 576 residues: Proline--tRNA ligase (576 aa).

The protein belongs to the class-II aminoacyl-tRNA synthetase family. ProS type 1 subfamily. As to quaternary structure, homodimer.

The protein localises to the cytoplasm. It carries out the reaction tRNA(Pro) + L-proline + ATP = L-prolyl-tRNA(Pro) + AMP + diphosphate. Its function is as follows. Catalyzes the attachment of proline to tRNA(Pro) in a two-step reaction: proline is first activated by ATP to form Pro-AMP and then transferred to the acceptor end of tRNA(Pro). As ProRS can inadvertently accommodate and process non-cognate amino acids such as alanine and cysteine, to avoid such errors it has two additional distinct editing activities against alanine. One activity is designated as 'pretransfer' editing and involves the tRNA(Pro)-independent hydrolysis of activated Ala-AMP. The other activity is designated 'posttransfer' editing and involves deacylation of mischarged Ala-tRNA(Pro). The misacylated Cys-tRNA(Pro) is not edited by ProRS. This is Proline--tRNA ligase from Finegoldia magna (strain ATCC 29328 / DSM 20472 / WAL 2508) (Peptostreptococcus magnus).